A 320-amino-acid chain; its full sequence is UPF0053 protein in cps region (320 aa).

The helical transmembrane segment at Cys4 to Ile24 threads the bilayer. CBS domains are found at residues Met121–Leu183 and Leu186–Val244.

This sequence belongs to the UPF0053 family.

Its subcellular location is the cell membrane. In Klebsiella pneumoniae, this protein is UPF0053 protein in cps region.